The chain runs to 266 residues: Undecaprenyl-diphosphatase (266 aa).

A run of 8 helical transmembrane segments spans residues 1–21 (METF…FLPI), 39–59 (QGFS…VIYF), 87–107 (WWII…KDFI), 111–131 (LRNT…LWWA), 149–169 (ALLI…RSGA), 183–203 (AAAK…AILV), 218–238 (ALGI…YYFL), and 246–266 (MTPF…LILW).

It belongs to the UppP family.

It is found in the cell inner membrane. The enzyme catalyses di-trans,octa-cis-undecaprenyl diphosphate + H2O = di-trans,octa-cis-undecaprenyl phosphate + phosphate + H(+). In terms of biological role, catalyzes the dephosphorylation of undecaprenyl diphosphate (UPP). Confers resistance to bacitracin. In Shewanella denitrificans (strain OS217 / ATCC BAA-1090 / DSM 15013), this protein is Undecaprenyl-diphosphatase.